The chain runs to 95 residues: Protein TusB (95 aa).

The protein belongs to the DsrH/TusB family. In terms of assembly, heterohexamer, formed by a dimer of trimers. The hexameric TusBCD complex contains 2 copies each of TusB, TusC and TusD. The TusBCD complex interacts with TusE.

Its subcellular location is the cytoplasm. Part of a sulfur-relay system required for 2-thiolation of 5-methylaminomethyl-2-thiouridine (mnm(5)s(2)U) at tRNA wobble positions. The chain is Protein TusB from Escherichia coli (strain ATCC 8739 / DSM 1576 / NBRC 3972 / NCIMB 8545 / WDCM 00012 / Crooks).